Consider the following 78-residue polypeptide: MVKLRLKRYGKKQQPTYRIVAIESSFRREGRAFKEVGIYIPKYNKTQLNVPAIIELLKNGAQPTSTVKNILLRAQIVV.

Belongs to the bacterial ribosomal protein bS16 family.

The protein resides in the plastid. Its subcellular location is the chloroplast. This is Small ribosomal subunit protein bS16c from Chara vulgaris (Common stonewort).